A 517-amino-acid chain; its full sequence is Xylosidase/arabinosidase (517 aa).

Residue aspartate 15 is the Proton acceptor of the active site. Glutamate 185 acts as the Proton donor in catalysis.

Belongs to the glycosyl hydrolase 43 family.

The enzyme catalyses Hydrolysis of (1-&gt;4)-beta-D-xylans, to remove successive D-xylose residues from the non-reducing termini.. It catalyses the reaction Hydrolysis of terminal non-reducing alpha-L-arabinofuranoside residues in alpha-L-arabinosides.. Its function is as follows. Has a 1.6-fold higher activity as an arabinosidase than as a beta-xylosidase when tested on the substrates nitrophenyl-beta-D-xylopyranoside and P-nitrophenyl-alpha-L-arabinofuranoside. This Butyrivibrio fibrisolvens protein is Xylosidase/arabinosidase (xylB).